The sequence spans 556 residues: Polypyrimidine tract-binding protein 1 (556 aa).

At methionine 1 the chain carries N-acetylmethionine. Position 16 is a phosphoserine (serine 16). Positions 35-54 (ASAANGNDSKKFKGDNRSTG) are disordered. RRM domains lie at 58–142 (RVIH…SSPN), 183–259 (LRII…FSKL), and 362–436 (SVLL…LSKH). Lysine 64 participates in a covalent cross-link: Glycyl lysine isopeptide (Lys-Gly) (interchain with G-Cter in SUMO2). Tyrosine 126 bears the Phosphotyrosine mark. A Phosphothreonine modification is found at threonine 137. Phosphoserine is present on serine 140. A Glycyl lysine isopeptide (Lys-Gly) (interchain with G-Cter in SUMO2) cross-link involves residue lysine 217. The disordered stretch occupies residues 436-458 (HQSVQLPREGQEDQGLTKDYGSS). Residue serine 458 is modified to Phosphoserine. The RRM 4 domain occupies 479 to 554 (ATLHLSNIPP…HHLRVSFSKS (76 aa)).

Monomer. Part of a ternary complex containing KHSRP, PTBP1, PTBP2 and HNRPH1. Interacts with RAVER1 and SFPQ.

The protein resides in the nucleus. Its function is as follows. Plays a role in pre-mRNA splicing and in the regulation of alternative splicing events. Activates exon skipping of its own pre-mRNA during muscle cell differentiation. Binds to the polypyrimidine tract of introns. May promote RNA looping when bound to two separate polypyrimidine tracts in the same pre-mRNA. May promote the binding of U2 snRNP to pre-mRNA. Cooperates with RAVER1 to modulate switching between mutually exclusive exons during maturation of the TPM1 pre-mRNA. Represses the splicing of MAPT/Tau exon 10. Binds to polypyrimidine-rich controlling element (PCE) of CFTR and promotes exon skipping of CFTR exon 9, thereby antagonizing TIA1 and its role in exon inclusion of CFTR exon 9. Plays a role in the splicing of pyruvate kinase PKM by binding repressively to a polypyrimidine tract flanking PKM exon 9, inhibiting exon 9 inclusion and resulting in exon 10 inclusion and production of the PKM M2 isoform. The protein is Polypyrimidine tract-binding protein 1 (Ptbp1) of Rattus norvegicus (Rat).